We begin with the raw amino-acid sequence, 739 residues long: Lysine decarboxylase (739 aa).

The residue at position 367 (Lys367) is an N6-(pyridoxal phosphate)lysine. Basic and acidic residues predominate over residues 714 to 726 (ADEPGDKPSDTVK). The disordered stretch occupies residues 714–739 (ADEPGDKPSDTVKKAPGKKPSAAKKS). Over residues 728–739 (APGKKPSAAKKS) the composition is skewed to basic residues.

This sequence belongs to the Orn/Lys/Arg decarboxylase class-I family. Pyridoxal 5'-phosphate is required as a cofactor.

It localises to the cytoplasm. The catalysed reaction is L-lysine + H(+) = cadaverine + CO2. In Hafnia alvei, this protein is Lysine decarboxylase.